A 497-amino-acid polypeptide reads, in one-letter code: RNA polymerase sigma factor SigA (497 aa).

Disordered regions lie at residues methionine 1–serine 20 and lysine 62–leucine 86. A compositionally biased stretch (basic and acidic residues) spans threonine 63–proline 73. Positions lysine 74 to alanine 84 are enriched in basic residues. The sigma-70 factor domain-2 stretch occupies residues leucine 250–threonine 320. Positions aspartate 274–glutamine 277 match the Interaction with polymerase core subunit RpoC motif. The segment at glutamate 329–phenylalanine 410 is sigma-70 factor domain-3. The segment at leucine 423–histidine 478 is sigma-70 factor domain-4. The H-T-H motif DNA-binding region spans leucine 451–asparagine 470.

It belongs to the sigma-70 factor family. RpoD/SigA subfamily. Interacts transiently with the RNA polymerase catalytic core.

It is found in the cytoplasm. Its function is as follows. Sigma factors are initiation factors that promote the attachment of RNA polymerase to specific initiation sites and are then released. This sigma factor is the primary sigma factor during exponential growth. In Mycoplasma genitalium (strain ATCC 33530 / DSM 19775 / NCTC 10195 / G37) (Mycoplasmoides genitalium), this protein is RNA polymerase sigma factor SigA.